The chain runs to 127 residues: Glycine cleavage system H protein 1 (127 aa).

Positions 20-101 (SVTVGITAYA…MGEGWFFRFI (82 aa)) constitute a Lipoyl-binding domain. Lysine 60 is modified (N6-lipoyllysine).

This sequence belongs to the GcvH family. The glycine cleavage system is composed of four proteins: P, T, L and H. Requires (R)-lipoate as cofactor.

The glycine cleavage system catalyzes the degradation of glycine. The H protein shuttles the methylamine group of glycine from the P protein to the T protein. This chain is Glycine cleavage system H protein 1, found in Pseudomonas putida (strain ATCC 47054 / DSM 6125 / CFBP 8728 / NCIMB 11950 / KT2440).